We begin with the raw amino-acid sequence, 287 residues long: 2-dehydro-3-deoxyphosphooctonate aldolase (287 aa).

The protein belongs to the KdsA family.

It localises to the cytoplasm. The enzyme catalyses D-arabinose 5-phosphate + phosphoenolpyruvate + H2O = 3-deoxy-alpha-D-manno-2-octulosonate-8-phosphate + phosphate. The protein operates within carbohydrate biosynthesis; 3-deoxy-D-manno-octulosonate biosynthesis; 3-deoxy-D-manno-octulosonate from D-ribulose 5-phosphate: step 2/3. It functions in the pathway bacterial outer membrane biogenesis; lipopolysaccharide biosynthesis. The chain is 2-dehydro-3-deoxyphosphooctonate aldolase from Rhodopseudomonas palustris (strain ATCC BAA-98 / CGA009).